A 126-amino-acid chain; its full sequence is Antimicrobial protein 1 (126 aa).

A signal peptide spans 1-24; it reads MRSSLLLGLTVVLLLGVTVPPCMA.

As to expression, strongly expressed in gills, hemocytes and reproductive tract, with weaker expression in muscle, heart and digestive tract. Not detected in eyes and hepatopancreas (at protein level).

Its subcellular location is the secreted. In terms of biological role, has antibacterial activity against the Gram-positive bacteria E.coli (MIC&lt;50 ug/ml) and P.aeruginosa (MIC&lt;25 ug/ml), and the Gram-negative bacteria S.aureus (MIC&lt;100 ug/ml) and S.pyogenes (MIC&lt;50 ug/ml). The sequence is that of Antimicrobial protein 1 from Scylla serrata (Mud crab).